The following is a 281-amino-acid chain: Phosphonates import ATP-binding protein PhnC 2 (281 aa).

Residues 4–238 enclose the ABC transporter domain; the sequence is LTVDNVTKTY…LVDDLYGNVE (235 aa). 35-42 contributes to the ATP binding site; that stretch reads GESGAGKS. A disordered region spans residues 243–281; that stretch reads ATDNSDNSTVDTSDGTRYDTETGSDGTDEVDVIGRQVES. Low complexity predominate over residues 244 to 255; it reads TDNSDNSTVDTS.

It belongs to the ABC transporter superfamily. Phosphonates importer (TC 3.A.1.9.1) family. As to quaternary structure, the complex is composed of two ATP-binding proteins (PhnC), two transmembrane proteins (PhnE) and a solute-binding protein (PhnD).

The protein localises to the cell membrane. It catalyses the reaction phosphonate(out) + ATP + H2O = phosphonate(in) + ADP + phosphate + H(+). In terms of biological role, part of the ABC transporter complex PhnCDE involved in phosphonates import. Responsible for energy coupling to the transport system. The sequence is that of Phosphonates import ATP-binding protein PhnC 2 from Haloquadratum walsbyi (strain DSM 16790 / HBSQ001).